Reading from the N-terminus, the 252-residue chain is Phosphate import ATP-binding protein PstB (252 aa).

The 242-residue stretch at 6-247 folds into the ABC transporter domain; sequence ITIEKLNLYY…PKDERTEKYI (242 aa). An ATP-binding site is contributed by 38–45; that stretch reads GPSGCGKS.

The protein belongs to the ABC transporter superfamily. Phosphate importer (TC 3.A.1.7) family. In terms of assembly, the complex is composed of two ATP-binding proteins (PstB), two transmembrane proteins (PstC and PstA) and a solute-binding protein (PstS).

The protein resides in the cell membrane. It catalyses the reaction phosphate(out) + ATP + H2O = ADP + 2 phosphate(in) + H(+). In terms of biological role, part of the ABC transporter complex PstSACB involved in phosphate import. Responsible for energy coupling to the transport system. This is Phosphate import ATP-binding protein PstB from Lactobacillus delbrueckii subsp. bulgaricus (strain ATCC 11842 / DSM 20081 / BCRC 10696 / JCM 1002 / NBRC 13953 / NCIMB 11778 / NCTC 12712 / WDCM 00102 / Lb 14).